The following is a 174-amino-acid chain: FMN reductase (NADH) RutF (174 aa).

It belongs to the non-flavoprotein flavin reductase family. RutF subfamily.

The enzyme catalyses FMNH2 + NAD(+) = FMN + NADH + 2 H(+). Functionally, catalyzes the reduction of FMN to FMNH2 which is used to reduce pyrimidine by RutA via the Rut pathway. In Agrobacterium fabrum (strain C58 / ATCC 33970) (Agrobacterium tumefaciens (strain C58)), this protein is FMN reductase (NADH) RutF.